The primary structure comprises 580 residues: Putative multidrug export ATP-binding/permease protein YgaD (580 aa).

Over 1 to 17 (MGVMKRYMQFVKPYKKQ) the chain is Cytoplasmic. A helical transmembrane segment spans residues 18-38 (IFVTVLIGIVKFSIPLALPLL). One can recognise an ABC transmembrane type-1 domain in the interval 19-307 (FVTVLIGIVK…LINSSTTLTQ (289 aa)). The Extracellular portion of the chain corresponds to 39-57 (LKYVVDDIIQGGGTASDKT). Residues 58 to 78 (TSLFTIMAIMFALFLILRPPV) form a helical membrane-spanning segment. The Cytoplasmic portion of the chain corresponds to 79–135 (EYYRQYFAQWTASKVLYDIRAKLFDHIQKLSLRFYANTRTGEVISRVINDVEQTKDF). A helical membrane pass occupies residues 136–156 (VITGLMNIWLDMLTILIVISI). Over 157 to 163 (MLTLDVK) the chain is Extracellular. A helical membrane pass occupies residues 164-184 (LTLISIVLFPLYGISVKYFYG). Residues 185 to 243 (RLRKLTRERSQALAQVQGHLHERIQGMPVIRSFAIEDHEQAQFNEKNGHFLDKAIRHTN) are Cytoplasmic-facing. Residues 244 to 263 (WNAKTFAVVNTITDLAPLIV) traverse the membrane as a helical segment. Over 264 to 268 (IACAG) the chain is Extracellular. The chain crosses the membrane as a helical span at residues 269–288 (YFVINGPLTVGTMVAFVGYI). The Cytoplasmic segment spans residues 289 to 580 (DRMYNPVRRL…KHLFTIQNLN (292 aa)). Residues 341 to 576 (VEFQNVSFQY…ESQYKHLFTI (236 aa)) enclose the ABC transporter domain. ATP is bound at residue 375–382 (GMSGGGKS).

This sequence belongs to the ABC transporter superfamily. Homodimer.

The protein resides in the cell membrane. In terms of biological role, may be involved in multidrug export. Transmembrane domains (TMD) form a pore in the cell membrane and the ATP-binding domain (NBD) is responsible for energy generation. The polypeptide is Putative multidrug export ATP-binding/permease protein YgaD (ygaD) (Bacillus subtilis (strain 168)).